The chain runs to 213 residues: Gas vesicle protein F (213 aa).

The protein belongs to the gas vesicle GvpF/GvpL family. Binds GvpA.

It is found in the gas vesicle. In terms of biological role, a minor component of the gas vesicle, may be involved in preventing GvpA aggregation during gas vesicle nucleation. Gas vesicles are hollow, gas filled proteinaceous nanostructures found in some microorganisms. They allow positioning of halobacteria at the optimal depth for growth in the poorly aerated, shallow brine pools of their habitat. Its function is as follows. Expression of a 9.5 kb mc-vac DNA fragment containing 2 divergently transcribed regions (gvpD-gvpE-gvpF-gvpG-gvpH-gvpI-gvpJ-gvpK-gvpL-gvpM and gvpA-gvpC-gvpN-gvpO) allows H.volcanii to produce gas vesicles. This chain is Gas vesicle protein F, found in Haloferax mediterranei (strain ATCC 33500 / DSM 1411 / JCM 8866 / NBRC 14739 / NCIMB 2177 / R-4) (Halobacterium mediterranei).